The primary structure comprises 549 residues: Membrane protein insertase YidC (549 aa).

The chain crosses the membrane as a helical span at residues 6-26; it reads NLLLIGLLLVSFMLWQSWMVD. Residues 35–55 form a disordered region; sequence ATAESSVPASSGGDVPNQNDA. Helical transmembrane passes span 349–369, 424–444, 462–482, and 503–523; these read QFLH…TMIV, LGGC…YWTL, LSVK…MWYI, and PIVF…YWVV.

Belongs to the OXA1/ALB3/YidC family. Type 1 subfamily. As to quaternary structure, interacts with the Sec translocase complex via SecD. Specifically interacts with transmembrane segments of nascent integral membrane proteins during membrane integration.

Its subcellular location is the cell inner membrane. In terms of biological role, required for the insertion and/or proper folding and/or complex formation of integral membrane proteins into the membrane. Involved in integration of membrane proteins that insert both dependently and independently of the Sec translocase complex, as well as at least some lipoproteins. Aids folding of multispanning membrane proteins. This Tolumonas auensis (strain DSM 9187 / NBRC 110442 / TA 4) protein is Membrane protein insertase YidC.